The following is a 491-amino-acid chain: Large ribosomal subunit protein mL101 (rPPR4) (491 aa).

PPR repeat units lie at residues 122–156 (TELT…NITP), 157–191 (SSMS…NVMP), 192–226 (DSYT…GRVA), 228–262 (DWTT…NTQR), 263–293 (DFTA…LRLA), 298–328 (SNVA…WQAN), 333–367 (DIRI…GGKL), and 368–402 (NAKT…GKGD).

It belongs to the PPR family. P subfamily. As to quaternary structure, component of the mitochondrial ribosome large subunit.

It is found in the mitochondrion. This Arabidopsis thaliana (Mouse-ear cress) protein is Large ribosomal subunit protein mL101 (rPPR4).